A 90-amino-acid chain; its full sequence is Small ribosomal subunit protein uS15 (90 aa).

It belongs to the universal ribosomal protein uS15 family. In terms of assembly, part of the 30S ribosomal subunit. Forms a bridge to the 50S subunit in the 70S ribosome, contacting the 23S rRNA.

One of the primary rRNA binding proteins, it binds directly to 16S rRNA where it helps nucleate assembly of the platform of the 30S subunit by binding and bridging several RNA helices of the 16S rRNA. Its function is as follows. Forms an intersubunit bridge (bridge B4) with the 23S rRNA of the 50S subunit in the ribosome. This Helicobacter hepaticus (strain ATCC 51449 / 3B1) protein is Small ribosomal subunit protein uS15.